The primary structure comprises 128 residues: Large ribosomal subunit protein bL12 (128 aa).

It belongs to the bacterial ribosomal protein bL12 family. Homodimer. Part of the ribosomal stalk of the 50S ribosomal subunit. Forms a multimeric L10(L12)X complex, where L10 forms an elongated spine to which 2 to 4 L12 dimers bind in a sequential fashion. Binds GTP-bound translation factors.

Forms part of the ribosomal stalk which helps the ribosome interact with GTP-bound translation factors. Is thus essential for accurate translation. This is Large ribosomal subunit protein bL12 from Kineococcus radiotolerans (strain ATCC BAA-149 / DSM 14245 / SRS30216).